A 178-amino-acid chain; its full sequence is Caveolin-1 (178 aa).

Serine 2 bears the N-acetylserine mark. Phosphoserine is present on serine 2. Positions 2 to 94 are required for homooligomerization; sequence SGGKYVDSEG…WKASFTTFTV (93 aa). Residues 2–104 lie on the Cytoplasmic side of the membrane; the sequence is SGGKYVDSEG…TKYWFYRLLS (103 aa). N6-acetyllysine; alternate is present on lysine 5. A Glycyl lysine isopeptide (Lys-Gly) (interchain with G-Cter in ubiquitin); alternate cross-link involves residue lysine 5. Tyrosine 6 is subject to Phosphotyrosine. Position 9 is a phosphoserine (serine 9). Phosphotyrosine; by ABL1 is present on tyrosine 14. Tyrosine 25 is modified (phosphotyrosine). Residues lysine 26, lysine 30, lysine 39, lysine 47, and lysine 57 each participate in a glycyl lysine isopeptide (Lys-Gly) (interchain with G-Cter in ubiquitin) cross-link. Residues 82–94 form an interaction with CAVIN3 region; it reads DGIWKASFTTFTV. Positions 105-125 form an intramembrane region, helical; it reads ALFGIPMALIWGIYFAILSFL. At 126–178 the chain is on the cytoplasmic side; that stretch reads HIWAVVPCIKSFLIEIQCISRVYSIYVHTFCDPLFEAIGKIFSNIRINMQKEI. The interval 131–142 is interacts with SPRY1, SPRY2, SPRY3 and SPRY4; it reads VPCIKSFLIEIQ. Residues cysteine 133, cysteine 143, and cysteine 156 are each lipidated (S-palmitoyl cysteine). The segment at 149 to 160 is interacts with SPRY1, SPRY2, and SPRY4; it reads SIYVHTFCDPLF. The interacts with SPRY1, SPRY2, SPRY3 and SPRY4 stretch occupies residues 167 to 178; that stretch reads FSNIRINMQKEI.

This sequence belongs to the caveolin family. As to quaternary structure, homooligomer. Interacts with GLIPR2. Interacts with NOSTRIN. Interacts with SNAP25 and STX1A. Interacts (via the N-terminus) with DPP4; the interaction is direct. Interacts with CTNNB1, CDH1 and JUP. Interacts with PACSIN2; this interaction induces membrane tubulation. Interacts with SLC7A9. Interacts with BMX and BTK. Interacts with TGFBR1. Interacts with CAVIN3 (via leucine-zipper domain) in a cholesterol-sensitive manner. Interacts with CAVIN1. Interacts with EHD2 in a cholesterol-dependent manner. Forms a ternary complex with UBXN6 and VCP; mediates CAV1 targeting to lysosomes for degradation. Interacts with ABCG1; this interaction regulates ABCG1-mediated cholesterol efflux. Interacts with NEU3; this interaction enhances NEU3 sialidase activity within caveola. Interacts (via C-terminus) with SPRY1, SPRY2 (via C-terminus), SPRY3, and SPRY4. Interacts with IGFBP5; this interaction allows trafficking of IGFBP5 from the plasma membrane to the nucleus. In terms of processing, phosphorylated at Tyr-14 by ABL1 in response to oxidative stress. Ubiquitinated. Undergo monoubiquitination and multi- and/or polyubiquitination. Monoubiquitination of N-terminal lysines promotes integration in a ternary complex with UBXN6 and VCP which promotes oligomeric CAV1 targeting to lysosomes for degradation. Ubiquitinated by ZNRF1; leading to degradation and modulation of the TLR4-mediated immune response.

It is found in the golgi apparatus membrane. Its subcellular location is the cell membrane. The protein resides in the membrane. The protein localises to the caveola. It localises to the membrane raft. May act as a scaffolding protein within caveolar membranes. Forms a stable heterooligomeric complex with CAV2 that targets to lipid rafts and drives caveolae formation. Mediates the recruitment of CAVIN proteins (CAVIN1/2/3/4) to the caveolae. Interacts directly with G-protein alpha subunits and can functionally regulate their activity. Involved in the costimulatory signal essential for T-cell receptor (TCR)-mediated T-cell activation. Its binding to DPP4 induces T-cell proliferation and NF-kappa-B activation in a T-cell receptor/CD3-dependent manner. Recruits CTNNB1 to caveolar membranes and may regulate CTNNB1-mediated signaling through the Wnt pathway. Negatively regulates TGFB1-mediated activation of SMAD2/3 by mediating the internalization of TGFBR1 from membrane rafts leading to its subsequent degradation. Binds 20(S)-hydroxycholesterol (20(S)-OHC). The sequence is that of Caveolin-1 (CAV1) from Muntiacus muntjak (Barking deer).